The chain runs to 153 residues: Large ribosomal subunit protein uL13 (153 aa).

Positions 128-153 (SEHPHEAQSPEVLDVTSMNSKNTRSA) are disordered. A compositionally biased stretch (polar residues) spans 143 to 153 (TSMNSKNTRSA).

This sequence belongs to the universal ribosomal protein uL13 family. As to quaternary structure, part of the 50S ribosomal subunit.

In terms of biological role, this protein is one of the early assembly proteins of the 50S ribosomal subunit, although it is not seen to bind rRNA by itself. It is important during the early stages of 50S assembly. This chain is Large ribosomal subunit protein uL13, found in Roseobacter denitrificans (strain ATCC 33942 / OCh 114) (Erythrobacter sp. (strain OCh 114)).